The following is a 200-amino-acid chain: WUSCHEL-related homeobox 9 (200 aa).

Residues 10-74 constitute a DNA-binding region (homeobox; WUS-type); that stretch reads VKCGRWNPTA…NHKARERHHH (65 aa). Positions 70-80 are enriched in basic residues; sequence ERHHHKKRRRG. Positions 70-118 are disordered; sequence ERHHHKKRRRGASSPDSGSNDDDGRAAAHEGDADLVLQPPESKREARSY. The segment covering 91–101 has biased composition (basic and acidic residues); the sequence is DDGRAAAHEGD.

This sequence belongs to the WUS homeobox family. In terms of tissue distribution, specifically expressed in the central cells of the quiescent center (QC) of the root.

The protein localises to the nucleus. Transcription factor which may be involved in the specification and maintenance of the stem cells (QC cells) in the root apical meristem (RAM). This is WUSCHEL-related homeobox 9 (WOX9) from Oryza sativa subsp. japonica (Rice).